A 163-amino-acid polypeptide reads, in one-letter code: Nucleotide-binding protein CJJ81176_0398 (163 aa).

It belongs to the YajQ family.

Its function is as follows. Nucleotide-binding protein. The polypeptide is Nucleotide-binding protein CJJ81176_0398 (Campylobacter jejuni subsp. jejuni serotype O:23/36 (strain 81-176)).